The sequence spans 348 residues: Bifunctional nitrilase/nitrile hydratase NIT4B (348 aa).

Positions 29-300 constitute a CN hydrolase domain; sequence VRATVVQAST…EALISADLDL (272 aa). Glu-69 serves as the catalytic Proton acceptor. The Proton donor role is filled by Lys-156. Cys-190 (nucleophile) is an active-site residue.

This sequence belongs to the carbon-nitrogen hydrolase superfamily. Nitrilase family. As to expression, expressed in roots, stems, cotyledons, leaves and flowers.

The catalysed reaction is a nitrile + 2 H2O = a carboxylate + NH4(+). It catalyses the reaction 3-cyano-L-alanine + 2 H2O = L-aspartate + NH4(+). In terms of biological role, highly specific for beta-cyano-L-alanine (Ala(CN)). Low activity with 3-phenylpropionitrile (PPN). Not associated with auxin production but may be involved in cyanide detoxification. This chain is Bifunctional nitrilase/nitrile hydratase NIT4B (NIT4B), found in Nicotiana tabacum (Common tobacco).